We begin with the raw amino-acid sequence, 207 residues long: Small ribosomal subunit protein uS4 (207 aa).

Positions 22 to 54 (KSARRSISDKSKFESKPGQHGRTSGSRTSDFGL) are disordered. Positions 27–38 (SISDKSKFESKP) are enriched in basic and acidic residues. A compositionally biased stretch (polar residues) spans 42-52 (GRTSGSRTSDF). Residues 97 to 157 (SRLDNVVYRM…EKSKKQLRII (61 aa)) enclose the S4 RNA-binding domain.

It belongs to the universal ribosomal protein uS4 family. Part of the 30S ribosomal subunit. Contacts protein S5. The interaction surface between S4 and S5 is involved in control of translational fidelity.

One of the primary rRNA binding proteins, it binds directly to 16S rRNA where it nucleates assembly of the body of the 30S subunit. Its function is as follows. With S5 and S12 plays an important role in translational accuracy. This chain is Small ribosomal subunit protein uS4, found in Leptothrix cholodnii (strain ATCC 51168 / LMG 8142 / SP-6) (Leptothrix discophora (strain SP-6)).